The sequence spans 528 residues: GMP synthase [glutamine-hydrolyzing] (528 aa).

In terms of domain architecture, Glutamine amidotransferase type-1 spans 3–199; that stretch reads KVAIIDFGSQ…FLDIAGCQKD (197 aa). Cys83 (nucleophile) is an active-site residue. Active-site residues include His174 and Glu176. In terms of domain architecture, GMPS ATP-PPase spans 200-394; the sequence is WTVTSFIDDQ…LGISTEILMR (195 aa). 227 to 233 lines the ATP pocket; sequence SGGVDSS.

As to quaternary structure, homodimer.

The catalysed reaction is XMP + L-glutamine + ATP + H2O = GMP + L-glutamate + AMP + diphosphate + 2 H(+). It participates in purine metabolism; GMP biosynthesis; GMP from XMP (L-Gln route): step 1/1. In terms of biological role, catalyzes the synthesis of GMP from XMP. This is GMP synthase [glutamine-hydrolyzing] from Ehrlichia ruminantium (strain Gardel).